The chain runs to 303 residues: Acetylglutamate kinase (303 aa).

Residues 69-70, Arg91, and Asn190 contribute to the substrate site; that span reads GG.

This sequence belongs to the acetylglutamate kinase family. ArgB subfamily.

The protein resides in the cytoplasm. It catalyses the reaction N-acetyl-L-glutamate + ATP = N-acetyl-L-glutamyl 5-phosphate + ADP. It participates in amino-acid biosynthesis; L-arginine biosynthesis; N(2)-acetyl-L-ornithine from L-glutamate: step 2/4. Catalyzes the ATP-dependent phosphorylation of N-acetyl-L-glutamate. The protein is Acetylglutamate kinase of Nocardia farcinica (strain IFM 10152).